The following is an 89-amino-acid chain: Large ribosomal subunit protein bL27 (89 aa).

The tract at residues 1–24 is disordered; it reads MAHKKAGGSSRNGRDSAGRRLGVK.

The protein belongs to the bacterial ribosomal protein bL27 family.

The protein is Large ribosomal subunit protein bL27 of Maricaulis maris (strain MCS10) (Caulobacter maris).